Reading from the N-terminus, the 904-residue chain is Phosphoenolpyruvate carboxylase (904 aa).

The disordered stretch occupies residues isoleucine 52–arginine 71. Residues histidine 151 and lysine 570 contribute to the active site.

It belongs to the PEPCase type 1 family. Requires Mg(2+) as cofactor.

The enzyme catalyses oxaloacetate + phosphate = phosphoenolpyruvate + hydrogencarbonate. Functionally, forms oxaloacetate, a four-carbon dicarboxylic acid source for the tricarboxylic acid cycle. The polypeptide is Phosphoenolpyruvate carboxylase (Xanthomonas oryzae pv. oryzae (strain MAFF 311018)).